The primary structure comprises 976 residues: Chitin synthase 3A (976 aa).

A disordered region spans residues 29 to 72; that stretch reads DDANASNRSPVSNPYEPDYDQLSPPPMLGAQRPVPEQNESSRDL. The segment covering 31–40 has biased composition (polar residues); sequence ANASNRSPVS. N-linked (GlcNAc...) asparagine glycosylation is found at Asn-32, Asn-66, Asn-95, and Asn-602. 7 helical membrane-spanning segments follow: residues 639 to 659, 684 to 704, 717 to 737, 773 to 793, 801 to 821, 903 to 923, and 944 to 964; these read LLNV…TTII, IVNV…FVLA, VLSF…TGYL, LIII…FLYL, SFPQ…VYAF, TGLV…VTTD, and FLLY…LWFI.

Belongs to the chitin synthase family. Class III subfamily.

The protein localises to the cell membrane. It catalyses the reaction [(1-&gt;4)-N-acetyl-beta-D-glucosaminyl](n) + UDP-N-acetyl-alpha-D-glucosamine = [(1-&gt;4)-N-acetyl-beta-D-glucosaminyl](n+1) + UDP + H(+). Its function is as follows. Polymerizes chitin, a structural polymer of the cell wall and septum, by transferring the sugar moiety of UDP-GlcNAc to the non-reducing end of the growing chitin polymer. Shows additive effects in septum formation with CHS1, CHS2, CHS4, CHS5, CHS6 and CHS7. Involved in virulence and mediates mycotoxin deoxinivalenol (DON) biosynthesis via the regulation of the expression of TRI4, TRI5 and TRI6. This chain is Chitin synthase 3A, found in Gibberella zeae (strain ATCC MYA-4620 / CBS 123657 / FGSC 9075 / NRRL 31084 / PH-1) (Wheat head blight fungus).